Reading from the N-terminus, the 717-residue chain is MALYRSDPYSIMDDQLFSNISIFDMDNDLYDMDKLLSSSTIQSDLEKIEDMESVFQDYDLEEDMKPEIRNIDCMWPAMSSCLTSGNGNGIESGNSAASSYSETGAVSLAMVSGSTNLYSAYQRSQTTDNTQSNQQHVVNSAENMPVIIKKELADLDYTVCQKRLRLSGGDKKSQIQDEVHLIPPGGSLLRKRNNQDIIRKSGELSGSDSIKYQRPDTPHSLTDEVAASEFRHNVDLRACVMGSNNISLTGNDSDVNYIKQISRELQNTGKDPLPVRYIPPINDVLDVLNQHSNSTGGQQQLNQQQLDEQQQAIDIATGRNTVDSPPTTGSDSDSDDGEPLNFDLRHHRTSKSGSNASITTNNNNSNNKNNKLKNNSNGMLHMMHITDHSYTRCNDMVDDGPNLETPSDSDEEIDVVSYTDKKLPTNPSCHLMGALQFQMAHKISIDHMKQKPRYNNFNLPYTPASSSPVKSVANSRYPSPSSTPYQNCSSASPSYSPLSVDSSNVSSSSSSSSSQSSFTTSSSNKGRKRSSLKDPGLLISSSSVYLPGVNNKVTHSSMMSKKSRGKKVVGTSSGNTSPISSGQDVDAMDRNWQRRSGGIATSTSSNSSVHRKDFVLGFDEADTIEKRNQHNDMERQRRIGLKNLFEALKKQIPTIRDKERAPKVNILREAAKLCIQLTQEEKELSMQRQLLSLQLKQRQDTLASYQMELNESRSVSG.

Thr-217 carries the phosphothreonine modification. Position 220 is a phosphoserine (Ser-220). 3 disordered regions span residues 288-376, 462-535, and 555-584; these read LNQH…KNNS, TPAS…LKDP, and HSSMMSKKSRGKKVVGTSSGNTSPISSGQD. Low complexity predominate over residues 298-311; it reads QQQLNQQQLDEQQQ. Positions 351 to 360 are enriched in polar residues; the sequence is KSGSNASITT. The span at 361–376 shows a compositional bias: low complexity; that stretch reads NNNNSNNKNNKLKNNS. The segment covering 462–488 has biased composition (polar residues); sequence TPASSSPVKSVANSRYPSPSSTPYQNC. Residues 489-523 show a composition bias toward low complexity; sequence SSASPSYSPLSVDSSNVSSSSSSSSSQSSFTTSSS. The segment at 625–638 is basic motif; it reads EKRNQHNDMERQRR. The region spanning 625-677 is the bHLH domain; it reads EKRNQHNDMERQRRIGLKNLFEALKKQIPTIRDKERAPKVNILREAAKLCIQL. A helix-loop-helix motif region spans residues 639 to 677; it reads IGLKNLFEALKKQIPTIRDKERAPKVNILREAAKLCIQL.

It belongs to the Myc transcription factor family. Efficient DNA binding requires dimerization with another bHLH protein. Binds DNA as a heterodimer with Max. Interacts with ago. Interacts with lid. Part of a complex containing lid, Myc and ash2. Component of a complex with pont and rept. Interacts with puf. Interacts with wh/wuho; the interaction may be mediated by mei-P26 and may be involved in the regulation of ribosome biogenesis. In terms of processing, probably targeted for ubiquitination by the SFC ubiquitin ligase complex member ago, leading to its proteasomal degradation. Low levels detected throughout embryo before cellular blastoderm formation, particularly concentrated in pole plasm. Zygotic expression detected during cellular blastoderm stage in endodermal anlagen of anterior and posterior midgut at both poles. After gastrulation, expression detected in invaginating ventral furrow of mesoderm. Continued expression in anterior and posterior midgut and mesoderm during germband extension. During late germ-band retraction, expression remains detectable in fusing midgut and presumed developing somatic musculature.

Its subcellular location is the nucleus. It is found in the nucleolus. The protein localises to the cytoplasm. Its function is as follows. Participates in the regulation of gene transcription. Binds DNA in a non-specific manner, yet also specifically recognizes the core sequence CAC[GA]TG. Seems to activate the transcription of growth-related genes; required for cellular proliferation and growth. Functions in the TORC2-mediated regulation of cell growth, acting downstream of the TORC2 complex. Inhibits the demethylase activity of Lid. Activates transcription of mbm. Has a role in ribosome biogenesis and endoreplication in fat body cells by activating the transcription of LTV1. Able to induce the SCF E3 ubiquitin-protein ligase member archipelago (ago) which functions in its degradation. It may therefore create a negative feedback loop with ago that is regulated by the ubiquitin hydrolase puf. In dopaminergic neurons, regulates dopamine levels by binding to the E-box (E1) of the dopamine decarboxylase Ddc promoter and thereby inhibiting its transcription. This regulation is required to suppress male-male courtship. Involved in the acs and insulin signaling mediated non-cell-autonomous induction of amino acid release into the hemolymph following the cytoplasmic purge response to intestinal bacterial infection; required for efficient recovery of enterocyte thickness. This Drosophila melanogaster (Fruit fly) protein is Myc proto-oncogene protein.